The sequence spans 965 residues: PWWP domain-containing protein 4 (965 aa).

The region spanning 135-196 (VGDMVWGKVK…PAELIPFEPH (62 aa)) is the PWWP domain. Residues 437–455 (MNFTSSSGNIPGKKSSVSK) are compositionally biased toward polar residues. Disordered stretches follow at residues 437–507 (MNFT…KSSL), 526–577 (VVKR…KSSQ), 649–708 (SAKT…SLAP), and 905–927 (LSSQDSEPKPVNNQVDHVEPPLD). Composition is skewed to basic and acidic residues over residues 456-474 (LSRDDDKGLAQESDVRMGE) and 481-495 (DQEKFEPMKSLKQDE). Polar residues predominate over residues 496–507 (TGTNSRSNKSSL). A Nuclear localization signal motif is present at residues 546–553 (KKKEYVSE). A compositionally biased stretch (basic and acidic residues) spans 549 to 563 (EYVSELNRDTPDKRK). Residues 657–676 (NEQSKAGRNRISSDSQQDVP) show a composition bias toward polar residues. Residues 691–702 (ASDKKTNQDATK) are compositionally biased toward basic and acidic residues. The segment covering 905-919 (LSSQDSEPKPVNNQV) has biased composition (polar residues).

The protein belongs to the PDP family. Component of the PRC2 (polycomb repressive complex 2) complex which regulates histone methylation on histone H3K27.

The protein localises to the nucleus. Functionally, may influence gene expression by regulating the function of the PRC2 complex and modulating H3K27me3 level. The protein is PWWP domain-containing protein 4 of Arabidopsis thaliana (Mouse-ear cress).